The chain runs to 321 residues: MDKKISISQIKEVVQQAYEQVKGNTGGKNADYIPYLANIDKNLFGISVCLLNGQTITVGDFDYRFGIESVSKVHTAILILRQYGAQKVLEMIGADATGLPFNSIIAILLENDHPSTPLVNAGAISACSMVTPIGNSDKKWDAIVQNITDLCGSAPQLIEELYKSETATNFNNRSIAWLLKNYNRIYDDPNMSLDLYTRQCSLGVTAQMLSVAAGTVANGGVNPVTKKQVFDSELTPKITSMIATVGFYEHSGDWMYTSGIPAKTGVGGGVMGVLPGVFGVSAFAPPLDGSGNSVKAQLAIKYIMNKLGLNVFNGARVTIVD.

Substrate is bound by residues Ser-69, Asn-120, Glu-165, Asn-172, Tyr-196, Tyr-248, and Val-266.

The protein belongs to the glutaminase family. In terms of assembly, homotetramer.

It catalyses the reaction L-glutamine + H2O = L-glutamate + NH4(+). This Bacteroides fragilis (strain YCH46) protein is Glutaminase.